A 972-amino-acid polypeptide reads, in one-letter code: FHF complex subunit HOOK-interacting protein 1B (972 aa).

Disordered regions lie at residues 465–548 (APSP…GELE) and 573–644 (SAPY…SWPE). Ser-467 is subject to Phosphoserine. Positions 478-501 (RGPGSPSVDSSSVTTVPRPSTPSR) are enriched in low complexity. A phosphoserine mark is found at Ser-510, Ser-523, Ser-529, and Ser-533. Positions 523-535 (SPGLSASPASSPG) are enriched in low complexity. Ser-859 and Ser-897 each carry phosphoserine.

It belongs to the FHIP family. As to quaternary structure, component of the FTS/Hook/FHIP complex (FHF complex), composed of AKTIP/FTS, FHIP1B, and one or more members of the Hook family of proteins HOOK1, HOOK2, and HOOK3. The FHF complex associates with the homotypic vesicular sorting complex (the HOPS complex).

Its function is as follows. Component of the FTS/Hook/FHIP complex (FHF complex). The FHF complex may function to promote vesicle trafficking and/or fusion via the homotypic vesicular protein sorting complex (the HOPS complex). FHF complex promotes the distribution of AP-4 complex to the perinuclear area of the cell. The chain is FHF complex subunit HOOK-interacting protein 1B from Homo sapiens (Human).